Reading from the N-terminus, the 111-residue chain is MGSSFSGSTEFSAPAPPTVSTAVPANPPAKSAVPASPARDPELKTCWSCRVLSGSTLFGAGTYVYLVARRPLKQGIPPGPGTVLQMVIGISIACWGVVVLVDPKGKSHPVI.

Residues 1–11 are compositionally biased toward polar residues; that stretch reads MGSSFSGSTEF. The disordered stretch occupies residues 1–40; the sequence is MGSSFSGSTEFSAPAPPTVSTAVPANPPAKSAVPASPARD. Low complexity predominate over residues 18 to 38; sequence TVSTAVPANPPAKSAVPASPA. Transmembrane regions (helical) follow at residues 51–68 and 81–101; these read VLSGSTLFGAGTYVYLVA and GTVLQMVIGISIACWGVVVLV.

As to quaternary structure, interacts with incompletely assembled mitochondrial NADH:ubiquinone oxidoreductase complex (complex I).

Its subcellular location is the mitochondrion inner membrane. Its function is as follows. Required for the assembly of the mitochondrial NADH:ubiquinone oxidoreductase complex (complex I). Involved in the assembly of the distal region of complex I. The chain is Distal membrane-arm assembly complex protein 1 from Mus musculus (Mouse).